Here is a 75-residue protein sequence, read N- to C-terminus: Mitochondrial import receptor subunit TOM7-1 (75 aa).

An N-acetylmethionine modification is found at methionine 1. Positions 1-28 (MESTISLKVNKGKGKGSKGASSSDDKSK) are disordered. The Cytoplasmic segment spans residues 1–46 (MESTISLKVNKGKGKGSKGASSSDDKSKFDVVKEWTNWSLKKAKVV). A helical membrane pass occupies residues 47 to 64 (THYGFIPLVIFVGMNSDP). Residues 65-75 (KPHLFQLLSPV) lie on the Mitochondrial intermembrane side of the membrane.

Belongs to the Tom7 family. In terms of assembly, forms part of the preprotein translocase complex of the outer mitochondrial membrane (TOM complex) which consists of at least 6 different proteins (TOM5, TOM6, TOM7, TOM20, TOM22/TOM9 and TOM40). Expressed in roots, flowers, young cotyledons and leaves.

The protein resides in the mitochondrion outer membrane. Seems to act as a modulator of the dynamics of the mitochondrial protein transport machinery. Seems to promote the dissociation of subunits of the outer membrane translocase. The polypeptide is Mitochondrial import receptor subunit TOM7-1 (TOM7-1) (Arabidopsis thaliana (Mouse-ear cress)).